The primary structure comprises 138 residues: Peptide methionine sulfoxide reductase MsrB (138 aa).

The 123-residue stretch at 15–137 (EAEWRAQLDP…NSASLGFEPR (123 aa)) folds into the MsrB domain. Residues cysteine 54, cysteine 57, cysteine 103, and cysteine 106 each coordinate Zn(2+). Catalysis depends on cysteine 126, which acts as the Nucleophile.

It belongs to the MsrB Met sulfoxide reductase family. The cofactor is Zn(2+).

The enzyme catalyses L-methionyl-[protein] + [thioredoxin]-disulfide + H2O = L-methionyl-(R)-S-oxide-[protein] + [thioredoxin]-dithiol. The polypeptide is Peptide methionine sulfoxide reductase MsrB (Methylibium petroleiphilum (strain ATCC BAA-1232 / LMG 22953 / PM1)).